The chain runs to 327 residues: Probable cell division protein WhiA (327 aa).

Positions 275–308 (SLEELGRLADPQMTKDAVAGRIRRLLTMADKRAE) form a DNA-binding region, H-T-H motif.

This sequence belongs to the WhiA family.

Its function is as follows. Involved in cell division and chromosome segregation. This Corynebacterium glutamicum (strain ATCC 13032 / DSM 20300 / JCM 1318 / BCRC 11384 / CCUG 27702 / LMG 3730 / NBRC 12168 / NCIMB 10025 / NRRL B-2784 / 534) protein is Probable cell division protein WhiA.